The primary structure comprises 135 residues: Protein PsiE homolog (135 aa).

4 helical membrane-spanning segments follow: residues 14–34, 54–74, 82–102, and 107–127; these read LQTI…IFLV, YQLI…ALIV, HFPL…LIIV, and PSDT…LYLA.

The protein belongs to the PsiE family.

Its subcellular location is the cell inner membrane. The sequence is that of Protein PsiE homolog from Pectobacterium atrosepticum (strain SCRI 1043 / ATCC BAA-672) (Erwinia carotovora subsp. atroseptica).